Consider the following 520-residue polypeptide: Alpha-1B adrenergic receptor (520 aa).

Residues 1 to 45 (MNPDLDTGHNTSAPAHWGELKNANFTGPNQTSSNSTLPQLDITRA) lie on the Extracellular side of the membrane. N-linked (GlcNAc...) asparagine glycosylation is found at Asn10, Asn24, Asn29, and Asn34. The chain crosses the membrane as a helical span at residues 46 to 70 (ISVGLVLGAFILFAIVGNILVILSV). Residues 71–83 (ACNRHLRTPTNYF) lie on the Cytoplasmic side of the membrane. Residues 84-105 (IVNLAMADLLLSFTVLPFSAAL) traverse the membrane as a helical segment. Topologically, residues 106–115 (EVLGYWVLGR) are extracellular. Residues 116–141 (IFCDIWAAVDVLCCTASILSLCAISI) traverse the membrane as a helical segment. The cysteines at positions 118 and 195 are disulfide-linked. Residues 142-161 (DRYIGVRYSLQYPTLVTRRK) lie on the Cytoplasmic side of the membrane. Residues 162–184 (AILALLSVWVLSTVISIGPLLGW) form a helical membrane-spanning segment. The Extracellular segment spans residues 185-201 (KEPAPNDDKECGVTEEP). Residues 202–224 (FYALFSSLGSFYIPLAVILVMYC) traverse the membrane as a helical segment. The Cytoplasmic segment spans residues 225-295 (RVYIVAKRTT…FSREKKAAKT (71 aa)). Phosphothreonine is present on Thr264. A helical transmembrane segment spans residues 296–319 (LGIVVGMFILCWLPFFIALPLGSL). Topologically, residues 320–326 (FSTLKPP) are extracellular. A helical transmembrane segment spans residues 327–351 (DAVFKVVFWLGYFNSCLNPIIYPCS). Residues 352–520 (SKEFKRAFVR…SNMPLAPGQF (169 aa)) are Cytoplasmic-facing. Cys365 carries the S-palmitoyl cysteine lipid modification. The Nuclear localization signal signature appears at 368-380 (RGRGRRRRRRRRR). Disordered regions lie at residues 394 to 432 (GGSL…GYLG) and 479 to 520 (LTEP…PGQF).

It belongs to the G-protein coupled receptor 1 family. Adrenergic receptor subfamily. ADRA1B sub-subfamily. As to quaternary structure, homo- and heterooligomer. Heterooligomerizes with ADRA1B homooligomers in cardiac myocytes. Interacts with CAVIN4.

The protein resides in the nucleus membrane. It localises to the cell membrane. Its subcellular location is the cytoplasm. It is found in the membrane. The protein localises to the caveola. Its function is as follows. This alpha-adrenergic receptor mediates its action by association with G proteins that activate a phosphatidylinositol-calcium second messenger system. Its effect is mediated by G(q) and G(11) proteins. Nuclear ADRA1A-ADRA1B heterooligomers regulate phenylephrine (PE)-stimulated ERK signaling in cardiac myocytes. The sequence is that of Alpha-1B adrenergic receptor (ADRA1B) from Homo sapiens (Human).